A 490-amino-acid chain; its full sequence is MADNQTTAAEPTNGRVTRVQGSVIDVEFPVGHLPDIYNALKVTIVNTGAKEEGEAKETEITLEVEQHLGDSTVRCVALKPTDGLVRGASVSDTGVPISVPVGDVTKGHVFDVSGNILNKKPDETITVSERWPIHRNPPAFDQLESKTQMFETGIKVIDLLTPYVQGGKIGLFGGAGVGKTVLIQEMIQRVAQNHGGVSVFAGVGERTREGNDLIGEMAEAGVLEKTALVFGQMDEQPGTRLRVPLTALTMAEYFRDVQNQDVLLFIDNIFRFTQAGSEVSTLLGRMPSAVGYQPNLADEMGSLQERITSTRGHSITSLQAIYVPADDYTDPAPATTFAHLDATTELSRDIASKGIYPAVDPLSSTSRILDPRYVGQAHYDCANRVKAILQRNKELQDIIALIGIDELSEEDKTTVNRARKIEQFLGQNFYVAEKFTGRPGSYVPADETIEAFTRICDGVYDDVPEQAFSGIGGIDDLEEKWHNMQKELGA.

ATP is bound at residue 173–180; it reads GGAGVGKT.

It belongs to the ATPase alpha/beta chains family. F-type ATPases have 2 components, CF(1) - the catalytic core - and CF(0) - the membrane proton channel. CF(1) has five subunits: alpha(3), beta(3), gamma(1), delta(1), epsilon(1). CF(0) has three main subunits: a(1), b(2) and c(9-12). The alpha and beta chains form an alternating ring which encloses part of the gamma chain. CF(1) is attached to CF(0) by a central stalk formed by the gamma and epsilon chains, while a peripheral stalk is formed by the delta and b chains.

It is found in the cell membrane. The enzyme catalyses ATP + H2O + 4 H(+)(in) = ADP + phosphate + 5 H(+)(out). Its function is as follows. Produces ATP from ADP in the presence of a proton gradient across the membrane. The catalytic sites are hosted primarily by the beta subunits. The polypeptide is ATP synthase subunit beta (Bifidobacterium longum subsp. infantis (strain ATCC 15697 / DSM 20088 / JCM 1222 / NCTC 11817 / S12)).